The sequence spans 170 residues: Inosine/xanthosine triphosphatase (170 aa).

The protein belongs to the YjjX NTPase family. As to quaternary structure, homodimer. It depends on Mg(2+) as a cofactor. Mn(2+) is required as a cofactor.

The catalysed reaction is XTP + H2O = XDP + phosphate + H(+). It carries out the reaction ITP + H2O = IDP + phosphate + H(+). Phosphatase that hydrolyzes non-canonical purine nucleotides such as XTP and ITP to their respective diphosphate derivatives. Probably excludes non-canonical purines from DNA/RNA precursor pool, thus preventing their incorporation into DNA/RNA and avoiding chromosomal lesions. This chain is Inosine/xanthosine triphosphatase, found in Aliivibrio fischeri (strain MJ11) (Vibrio fischeri).